A 966-amino-acid chain; its full sequence is Integrator complex subunit 7 (966 aa).

2 positions are modified to phosphoserine: S338 and S809. A disordered region spans residues 941-966; the sequence is LQQQAQQPLQPQPLPQPQPRSAYTRF.

Belongs to the Integrator subunit 7 family. In terms of assembly, component of the Integrator complex, composed of core subunits INTS1, INTS2, INTS3, INTS4, INTS5, INTS6, INTS7, INTS8, INTS9/RC74, INTS10, INTS11/CPSF3L, INTS12, INTS13, INTS14 and INTS15. The core complex associates with protein phosphatase 2A subunits PPP2CA and PPP2R1A, to form the Integrator-PP2A (INTAC) complex. Interacts with NABP2.

The protein resides in the nucleus. It localises to the chromosome. It is found in the cytoplasm. Functionally, component of the integrator complex, a multiprotein complex that terminates RNA polymerase II (Pol II) transcription in the promoter-proximal region of genes. The integrator complex provides a quality checkpoint during transcription elongation by driving premature transcription termination of transcripts that are unfavorably configured for transcriptional elongation: the complex terminates transcription by (1) catalyzing dephosphorylation of the C-terminal domain (CTD) of Pol II subunit POLR2A/RPB1 and SUPT5H/SPT5, (2) degrading the exiting nascent RNA transcript via endonuclease activity and (3) promoting the release of Pol II from bound DNA. The integrator complex is also involved in terminating the synthesis of non-coding Pol II transcripts, such as enhancer RNAs (eRNAs), small nuclear RNAs (snRNAs), telomerase RNAs and long non-coding RNAs (lncRNAs). May be not involved in the recruitment of cytoplasmic dynein to the nuclear envelope by different components of the INT complex. Plays a role in DNA damage response (DDR) signaling during the S phase. This chain is Integrator complex subunit 7 (Ints7), found in Mus musculus (Mouse).